The primary structure comprises 447 residues: Na(+)-translocating NADH-quinone reductase subunit A (447 aa).

Belongs to the NqrA family. As to quaternary structure, composed of six subunits; NqrA, NqrB, NqrC, NqrD, NqrE and NqrF.

It catalyses the reaction a ubiquinone + n Na(+)(in) + NADH + H(+) = a ubiquinol + n Na(+)(out) + NAD(+). Functionally, NQR complex catalyzes the reduction of ubiquinone-1 to ubiquinol by two successive reactions, coupled with the transport of Na(+) ions from the cytoplasm to the periplasm. NqrA to NqrE are probably involved in the second step, the conversion of ubisemiquinone to ubiquinol. The chain is Na(+)-translocating NADH-quinone reductase subunit A from Neisseria meningitidis serogroup A / serotype 4A (strain DSM 15465 / Z2491).